Consider the following 423-residue polypeptide: MEKTPAETTAVSAGNVPRDSIPCITNVSADTRGRTRPSRPATVPQRRPARIGHFRRRSASLSFLDWPDGSVTEGVRTTSASVAASAARFDEIRRRRQSINDEMKERTLEDALAVELVNETFRCSVTSDARKDLQKLVRRVSGTVLRLSWPNGWFFTYCDLLRVGYFGHLNIKGLEKTFLCCDKFLLPVGTVSRCEAIGRPPLPVLIGEGGRVYVYSPVVESLYLVSRSGFRGFVQEGLRNYAPLREELGYVRFETGGDVGREFMLARDLLALWRLCMKREGSIFSWRDGNEALTTVVLNGSQTYEDPAHGNWLKETCSLNVLQVFVVRAVPVESQQRLDISILVNESGAVFGVHPETRQAHFLARGLLGFFRVGFLRFCNNYCFARDCFTHPESVAPAYRATGCPRELFCRRLRKKKGLFARR.

Positions 1–12 (MEKTPAETTAVS) are enriched in polar residues. The segment at 1–46 (MEKTPAETTAVSAGNVPRDSIPCITNVSADTRGRTRPSRPATVPQR) is disordered.

The protein belongs to the herpesviridae US22 family.

The protein resides in the virion tegument. The polypeptide is Tegument protein UL43 (UL43) (Homo sapiens (Human)).